Reading from the N-terminus, the 135-residue chain is Probable transcription factor At2g20613 (135 aa).

The disordered stretch occupies residues 1 to 104; sequence MSHKRFNPLT…KRGGGGGEEA (104 aa). Residues 28–41 show a composition bias toward acidic residues; the sequence is DSSSDEETDSDSDS. The span at 62–80 shows a compositional bias: basic and acidic residues; it reads KSVKISEKSVAKRSRETHE.

This sequence belongs to the GeBP family.

The polypeptide is Probable transcription factor At2g20613 (Arabidopsis thaliana (Mouse-ear cress)).